The chain runs to 254 residues: 14-3-3-like protein GF14 epsilon (254 aa).

Ser65 and Ser188 each carry phosphoserine.

It belongs to the 14-3-3 family. Interacts with DREB1A and DREB1B in the nucleus. Interacts with CINV1.

The protein resides in the nucleus. Its subcellular location is the cytoplasm. Is associated with a DNA binding complex that binds to the G box, a well-characterized cis-acting DNA regulatory element found in plant genes. In Arabidopsis thaliana (Mouse-ear cress), this protein is 14-3-3-like protein GF14 epsilon (GRF10).